Consider the following 188-residue polypeptide: GTP cyclohydrolase 1 (188 aa).

3 residues coordinate Zn(2+): Cys-78, His-81, and Cys-150.

It belongs to the GTP cyclohydrolase I family. In terms of assembly, toroid-shaped homodecamer, composed of two pentamers of five dimers.

The enzyme catalyses GTP + H2O = 7,8-dihydroneopterin 3'-triphosphate + formate + H(+). It participates in cofactor biosynthesis; 7,8-dihydroneopterin triphosphate biosynthesis; 7,8-dihydroneopterin triphosphate from GTP: step 1/1. This Geobacillus kaustophilus (strain HTA426) protein is GTP cyclohydrolase 1.